The following is a 32-amino-acid chain: Acetolactate synthase, catabolic (32 aa).

The protein belongs to the TPP enzyme family. In terms of assembly, homodimer.

The enzyme catalyses 2 pyruvate + H(+) = (2S)-2-acetolactate + CO2. Its pathway is polyol metabolism; (R,R)-butane-2,3-diol biosynthesis; (R,R)-butane-2,3-diol from pyruvate: step 1/3. The polypeptide is Acetolactate synthase, catabolic (budB) (Klebsiella aerogenes (Enterobacter aerogenes)).